A 167-amino-acid polypeptide reads, in one-letter code: MVELESQEAVTVASTADIAVDVSLRLLAAATSLASAVVVAANHQQRWGVRVDFTLFQVWIGFVAVNLVCTVYAAATAAAARKAMGRWWLHHADAVVVNLEAAATAGAGAIGSIAMWGNEASGWYAVCRLYRRYCNAGAAALALSLAAVLLLGVACARSRYPKMPPTT.

Residues 1–17 are Cytoplasmic-facing; the sequence is MVELESQEAVTVASTAD. A helical membrane pass occupies residues 18–38; sequence IAVDVSLRLLAAATSLASAVV. Topologically, residues 39-54 are extracellular; it reads VAANHQQRWGVRVDFT. Residues 55–75 form a helical membrane-spanning segment; sequence LFQVWIGFVAVNLVCTVYAAA. The Cytoplasmic segment spans residues 76–94; sequence TAAAARKAMGRWWLHHADA. A helical membrane pass occupies residues 95–115; that stretch reads VVVNLEAAATAGAGAIGSIAM. Over 116-135 the chain is Extracellular; that stretch reads WGNEASGWYAVCRLYRRYCN. Residues 136–156 traverse the membrane as a helical segment; that stretch reads AGAAALALSLAAVLLLGVACA. Over 157-167 the chain is Cytoplasmic; the sequence is RSRYPKMPPTT.

The protein belongs to the Casparian strip membrane proteins (CASP) family. As to quaternary structure, homodimer and heterodimers.

It localises to the cell membrane. The sequence is that of CASP-like protein UU1 from Oryza sativa subsp. indica (Rice).